The chain runs to 140 residues: Chorion class A protein Ld2/Ld41 (140 aa).

Positions 1–21 (MNSFAFLLVCIQACLVQSVFS) are cleaved as a signal peptide.

The protein belongs to the chorion protein family.

Functionally, this protein is one of many from the eggshell of the gypsy moth. The sequence is that of Chorion class A protein Ld2/Ld41 from Lymantria dispar (Gypsy moth).